The chain runs to 496 residues: Transmembrane protein 104 (496 aa).

The Cytoplasmic portion of the chain corresponds to 1-10; sequence MAGEITETGE. Residues 11 to 31 traverse the membrane as a helical segment; sequence LYSSYVGLVYMFNLIVGTGAL. The Extracellular portion of the chain corresponds to 32–36; that stretch reads TMPKA. A helical transmembrane segment spans residues 37–57; it reads FATAGWLVSLVLLVFLGFMSF. Over 58–146 the chain is Cytoplasmic; that stretch reads VTTTFVIEAM…SMFFNKVGVN (89 aa). The chain crosses the membrane as a helical span at residues 147 to 167; the sequence is LFYFCIIVYLYGDLAIYAAAV. The Extracellular segment spans residues 168–204; the sequence is PFSLMQVTCSATGNDSCGVEADTKYNDTDRCWGPLRR. Asparagine 193 is a glycosylation site (N-linked (GlcNAc...) asparagine). Residues 205–225 form a helical membrane-spanning segment; it reads VDAYRIYLAIFTLLLGPFTFF. Topologically, residues 226–233 are cytoplasmic; it reads DVQKTKYL. A helical transmembrane segment spans residues 234-254; the sequence is QILTSLMRWIAFAVMIVLALI. Residues 255–276 are Extracellular-facing; it reads RIGHGQGEGHPPLADFSGVRNL. Residues 277 to 297 form a helical membrane-spanning segment; that stretch reads FGVCVYSFMCQHSLPSLITPV. Residues 298–306 are Cytoplasmic-facing; that stretch reads SSKRHLTRL. The helical transmembrane segment at 307 to 327 threads the bilayer; the sequence is VFLDYVLILAFYGLLSFTAIF. The Extracellular portion of the chain corresponds to 328–354; sequence CFRGDSLMDMYTLNFARCDVVGLAAVR. Residues 355–375 form a helical membrane-spanning segment; that stretch reads FFLGLFPVFTISTNFPIIAVT. At 376 to 397 the chain is on the cytoplasmic side; sequence LRNNWKTLFHREGGTYPWVVDR. The chain crosses the membrane as a helical span at residues 398-418; that stretch reads VVFPTITLVPPVLVAFCTHDL. Residues 419–421 lie on the Extracellular side of the membrane; sequence ESL. The chain crosses the membrane as a helical span at residues 422–442; sequence VGITGAYAGTGIQYVIPAFLV. Residues 443-470 lie on the Cytoplasmic side of the membrane; it reads YHCRRDTQLAFGCGVSNKHRSPFRHTFW. A helical membrane pass occupies residues 471–491; the sequence is VGFVLLWAFSCFIFVTANIIL. Over 492–496 the chain is Extracellular; it reads SETKL.

This sequence belongs to the TMEM104 family.

It is found in the membrane. This is Transmembrane protein 104 (TMEM104) from Homo sapiens (Human).